Reading from the N-terminus, the 284-residue chain is Avenin-like b11 (284 aa).

The signal sequence occupies residues 1–18; sequence MKVFILALLALTATTAIA.

Belongs to the prolamin family. Contains disulfide bonds.

Its function is as follows. Seed storage protein. Might be integrated via inter-chain disulfide bonds within the glutenin polymer. The chain is Avenin-like b11 from Triticum aestivum (Wheat).